The following is a 106-amino-acid chain: Large ribosomal subunit protein uL24 (106 aa).

This sequence belongs to the universal ribosomal protein uL24 family. As to quaternary structure, part of the 50S ribosomal subunit.

Its function is as follows. One of two assembly initiator proteins, it binds directly to the 5'-end of the 23S rRNA, where it nucleates assembly of the 50S subunit. One of the proteins that surrounds the polypeptide exit tunnel on the outside of the subunit. This is Large ribosomal subunit protein uL24 from Spiroplasma kunkelii.